The primary structure comprises 146 residues: Hemoglobin subunit beta (146 aa).

Residue valine 1 is modified to N-acetylvaline. The Globin domain maps to 2 to 146 (HLTAEEKSAV…VANALAHKYH (145 aa)). Residue serine 44 is modified to Phosphoserine. An N6-acetyllysine modification is found at lysine 59. Heme b is bound at residue histidine 63. N6-acetyllysine is present on lysine 82. Histidine 92 contributes to the heme b binding site. The residue at position 93 (cysteine 93) is an S-nitrosocysteine. Residue lysine 144 is modified to N6-acetyllysine.

It belongs to the globin family. Heterotetramer of two alpha chains and two beta chains. As to expression, red blood cells.

Functionally, involved in oxygen transport from the lung to the various peripheral tissues. The chain is Hemoglobin subunit beta from Tamias merriami (Merriam's chipmunk).